A 583-amino-acid polypeptide reads, in one-letter code: Long-chain-fatty-acid--AMP ligase FadD26 (583 aa).

This sequence belongs to the ATP-dependent AMP-binding enzyme family.

The catalysed reaction is holo-[(phenol)carboxyphthiodiolenone synthase] + a long-chain fatty acid + ATP = a long-chain fatty acyl-[(phenol)carboxyphthiodiolenone synthase] + AMP + diphosphate. It catalyses the reaction eicosanoate + holo-[(phenol)carboxyphthiodiolenone synthase] + ATP = icosanoyl-[(phenol)carboxyphthiodiolenone synthase] + AMP + diphosphate. The enzyme catalyses holo-[(phenol)carboxyphthiodiolenone synthase] + docosanoate + ATP = docosanoyl-[(phenol)carboxyphthiodiolenone synthase] + AMP + diphosphate. It participates in lipid metabolism; fatty acid biosynthesis. Functionally, catalyzes the activation of long-chain fatty acids as acyl-adenylates (acyl-AMP), which are then transferred to the multifunctional polyketide synthase PpsA for further chain extension. Catalyzes the adenylation of the long-chain fatty acids eicosanoate (C20) or docosanoate (C22), and potentially the very-long-chain fatty acid lignocerate (C24). Involved in the biosynthesis of phthiocerol dimycocerosate (DIM A) and phthiodiolone dimycocerosate (DIM B). The protein is Long-chain-fatty-acid--AMP ligase FadD26 (fadD26) of Mycobacterium bovis (strain ATCC BAA-935 / AF2122/97).